The chain runs to 987 residues: Sarcosine oxidase subunit alpha (987 aa).

The NAD(+) site is built by Asp-198, Glu-199, Ser-206, Ala-244, and Gly-445. Residues Thr-714 and Glu-806 each contribute to the (6R)-5,10-methylene-5,6,7,8-tetrahydrofolate site.

The protein belongs to the GcvT family. In terms of assembly, heterotetramer composed of subunits alpha (SoxA), beta (SoxB), gamma (SoxG) and delta (SoxD). NAD(+) is required as a cofactor.

The protein resides in the cytoplasm. It catalyses the reaction sarcosine + (6S)-5,6,7,8-tetrahydrofolate + O2 = (6R)-5,10-methylene-5,6,7,8-tetrahydrofolate + glycine + H2O2. The catalysed reaction is sarcosine + O2 + H2O = formaldehyde + glycine + H2O2. Functionally, in the presence of tetrahydrofolate, catalyzes the oxidative demethylation of sarcosine to yield glycine, 5,10-methylenetetrahydrofolate and hydrogen peroxide. In the absence of tetrahydrofolate, catalyzes the oxidative demethylation of sarcosine to yield glycine, formaldehyde and hydrogen peroxide. The chain is Sarcosine oxidase subunit alpha (soxA) from Rhizobium meliloti (strain 1021) (Ensifer meliloti).